Here is a 230-residue protein sequence, read N- to C-terminus: Ribose-5-phosphate isomerase A (230 aa).

Residues 29 to 32 (TGST), 85 to 88 (DGAD), and 98 to 101 (KGGG) each bind substrate. The active-site Proton acceptor is the Glu-107. Lys-125 is a binding site for substrate.

This sequence belongs to the ribose 5-phosphate isomerase family. Homodimer.

The enzyme catalyses aldehydo-D-ribose 5-phosphate = D-ribulose 5-phosphate. The protein operates within carbohydrate degradation; pentose phosphate pathway; D-ribose 5-phosphate from D-ribulose 5-phosphate (non-oxidative stage): step 1/1. Catalyzes the reversible conversion of ribose-5-phosphate to ribulose 5-phosphate. The chain is Ribose-5-phosphate isomerase A from Staphylococcus epidermidis (strain ATCC 35984 / DSM 28319 / BCRC 17069 / CCUG 31568 / BM 3577 / RP62A).